Reading from the N-terminus, the 425-residue chain is Histone-binding protein RBBP7 (425 aa).

WD repeat units follow at residues 47–122, 128–173, 181–217, 228–269, 275–312, 318–369, and 376–403; these read QWLP…KINH, RARY…LRLR, GLSW…KVVD, VVED…HSVD, VNCL…LHSF, EIFQ…LFIH, and ISDF…IWQM.

The protein belongs to the WD repeat RBAP46/RBAP48/MSI1 family. In terms of assembly, binds directly to helix 1 of the histone fold of histone H4, a region that is not accessible when H4 is in chromatin.

The protein localises to the nucleus. Functionally, core histone-binding subunit that may target chromatin remodeling factors, histone acetyltransferases and histone deacetylases to their histone substrates in a manner that is regulated by nucleosomal DNA. Component of several complexes which regulate chromatin metabolism. The sequence is that of Histone-binding protein RBBP7 (rbbp7) from Xenopus tropicalis (Western clawed frog).